A 146-amino-acid polypeptide reads, in one-letter code: Hemoglobin subunit beta (146 aa).

Val1 carries the N-acetylvaline modification. Residues 2-146 enclose the Globin domain; sequence HLSGEEKAAV…VANALAHKYH (145 aa). Thr12 carries the phosphothreonine modification. Ser44 carries the phosphoserine modification. At Lys59 the chain carries N6-acetyllysine. His63 contributes to the heme b binding site. Position 82 is an N6-acetyllysine (Lys82). His92 contacts heme b. Cys93 is subject to S-nitrosocysteine. The residue at position 144 (Lys144) is an N6-acetyllysine.

It belongs to the globin family. Heterotetramer of two alpha chains and two beta chains. Red blood cells.

Involved in oxygen transport from the lung to the various peripheral tissues. In Pteropus alecto (Black flying fox), this protein is Hemoglobin subunit beta (HBB).